Consider the following 612-residue polypeptide: Chaperone protein DnaK (612 aa).

Residue Thr174 is modified to Phosphothreonine; by autocatalysis. Positions 578–612 (GAQAGAQGQGAAGGQKQDGNVYDADYKVVDDDKKE) are disordered. Over residues 601–612 (ADYKVVDDDKKE) the composition is skewed to basic and acidic residues.

The protein belongs to the heat shock protein 70 family.

Its function is as follows. Acts as a chaperone. The protein is Chaperone protein DnaK of Moorella thermoacetica (strain ATCC 39073 / JCM 9320).